The primary structure comprises 378 residues: MRVLGLMSGTSADGIDAVLVDFTGDPSKPKWQILNTFSYEYPSSIREKIIQVGQGLKISSKDWLELAEEITELNAFAARTCDPDSTAEVVGCHGQTLFHRSVKKSKRGGSLQILLGPLLANLLDQIVIYDFRSKDIASGGHGAPLVALVDEALVGRLYGWRGVLNLGGIANLTIIPPKTGIDKTSQCLGWDCGPANSLVDLAVKESTNSSLTFDENGSLASLGIPKLEIIDKWLRDPFFYLEPPRSTGREQFGFQYLQKRKKELGDISKEDLISTLTTFTASIISQDLDNLFKFKQIRLIELLVAGGGSKNLFLMRQLQKQCCGVHVRPINEIGVPSQYREALVFATLSWWNFLGKKVNPKYITGAKKPILYGVRVDP.

9–16 (GTSADGID) serves as a coordination point for ATP.

The protein belongs to the anhydro-N-acetylmuramic acid kinase family.

The enzyme catalyses 1,6-anhydro-N-acetyl-beta-muramate + ATP + H2O = N-acetyl-D-muramate 6-phosphate + ADP + H(+). Its pathway is amino-sugar metabolism; 1,6-anhydro-N-acetylmuramate degradation. It functions in the pathway cell wall biogenesis; peptidoglycan recycling. In terms of biological role, catalyzes the specific phosphorylation of 1,6-anhydro-N-acetylmuramic acid (anhMurNAc) with the simultaneous cleavage of the 1,6-anhydro ring, generating MurNAc-6-P. Is required for the utilization of anhMurNAc either imported from the medium or derived from its own cell wall murein, and thus plays a role in cell wall recycling. The polypeptide is Anhydro-N-acetylmuramic acid kinase (Prochlorococcus marinus (strain NATL1A)).